The sequence spans 376 residues: Glutamate 5-kinase (376 aa).

K15 lines the ATP pocket. Substrate is bound by residues S55, D141, and N153. ATP contacts are provided by residues 173–174 (SD) and 215–221 (TGGMQTK). One can recognise a PUA domain in the interval 280–361 (AGRLTVDAGA…HAIAEVLDEA (82 aa)).

Belongs to the glutamate 5-kinase family.

It is found in the cytoplasm. It carries out the reaction L-glutamate + ATP = L-glutamyl 5-phosphate + ADP. It participates in amino-acid biosynthesis; L-proline biosynthesis; L-glutamate 5-semialdehyde from L-glutamate: step 1/2. Its function is as follows. Catalyzes the transfer of a phosphate group to glutamate to form L-glutamate 5-phosphate. In Salinibacter ruber (strain DSM 13855 / M31), this protein is Glutamate 5-kinase.